A 67-amino-acid chain; its full sequence is Vespin (67 aa).

Residues 1–21 (MHPIIWELSHMVDLQAAAQKL) form the signal peptide.

As to expression, expressed by the venom gland.

The protein resides in the secreted. Functionally, shows contractile activity on isolated ileum smooth muscle. This chain is Vespin, found in Vespa magnifica (Hornet).